Reading from the N-terminus, the 518-residue chain is 3-octaprenyl-4-hydroxybenzoate carboxy-lyase (518 aa).

A Mn(2+)-binding site is contributed by N177. Prenylated FMN contacts are provided by residues 180–182, 194–196, and 199–200; these read IYR, RWL, and RG. E243 lines the Mn(2+) pocket. D318 acts as the Proton donor in catalysis.

Belongs to the UbiD family. Homohexamer. It depends on prenylated FMN as a cofactor. Mn(2+) is required as a cofactor.

It is found in the cell membrane. It catalyses the reaction a 4-hydroxy-3-(all-trans-polyprenyl)benzoate + H(+) = a 2-(all-trans-polyprenyl)phenol + CO2. It functions in the pathway cofactor biosynthesis; ubiquinone biosynthesis. Catalyzes the decarboxylation of 3-octaprenyl-4-hydroxy benzoate to 2-octaprenylphenol, an intermediate step in ubiquinone biosynthesis. The sequence is that of 3-octaprenyl-4-hydroxybenzoate carboxy-lyase from Burkholderia lata (strain ATCC 17760 / DSM 23089 / LMG 22485 / NCIMB 9086 / R18194 / 383).